Reading from the N-terminus, the 175-residue chain is Alpha-crystallin B chain (175 aa).

At Met-1 the chain carries N-acetylmethionine. Residues Ser-19, Ser-45, and Ser-59 each carry the phosphoserine modification. Positions 56–164 (RAPSWIDTGL…PERTIPITRE (109 aa)) constitute a sHSP domain. His-83 contacts Zn(2+). Position 92 is an N6-acetyllysine (Lys-92). Zn(2+) contacts are provided by His-104, Glu-106, His-111, and His-119. A disordered region spans residues 145-175 (VNGPRKQVSGPERTIPITREEKPAVAAAPKK). The residue at position 166 (Lys-166) is an N6-acetyllysine.

Belongs to the small heat shock protein (HSP20) family. Heteromer composed of three CRYAA and one CRYAB subunits. Aggregates with homologous proteins, including the small heat shock protein HSPB1, to form large heteromeric complexes. Inter-subunit bridging via zinc ions enhances stability, which is crucial as there is no protein turn over in the lens. Interacts with HSPBAP1. Interacts with TTN/titin. Interacts with TMEM109; in the cellular response to DNA damage. Interacts with DES; binds rapidly during early stages of DES filament assembly and a reduced binding seen in the later stages. Interacts with TMED10; the interaction mediates the translocation from the cytoplasm into the ERGIC (endoplasmic reticulum-Golgi intermediate compartment) and thereby secretion. Interacts with ATP6V1A and with MTOR, forming a ternary complex. As to expression, abundantly expressed in the lens of the eye. Expressed in ventricular cardiomyocytes of the heart. Also expressed in skeletal muscle and the kidney.

The protein localises to the cytoplasm. The protein resides in the cytosol. It is found in the nucleus. Its subcellular location is the secreted. It localises to the lysosome. In terms of biological role, may contribute to the transparency and refractive index of the lens. Has chaperone-like activity, preventing aggregation of various proteins under a wide range of stress conditions. In lens epithelial cells, stabilizes the ATP6V1A protein, preventing its degradation by the proteasome. This chain is Alpha-crystallin B chain, found in Mus musculus (Mouse).